The chain runs to 90 residues: DNA-directed RNA polymerase subunit omega (90 aa).

Belongs to the RNA polymerase subunit omega family. The RNAP catalytic core consists of 2 alpha, 1 beta, 1 beta' and 1 omega subunit. When a sigma factor is associated with the core the holoenzyme is formed, which can initiate transcription.

The catalysed reaction is RNA(n) + a ribonucleoside 5'-triphosphate = RNA(n+1) + diphosphate. Promotes RNA polymerase assembly. Latches the N- and C-terminal regions of the beta' subunit thereby facilitating its interaction with the beta and alpha subunits. The polypeptide is DNA-directed RNA polymerase subunit omega (rpoZ) (Streptomyces coelicolor (strain ATCC BAA-471 / A3(2) / M145)).